Here is a 277-residue protein sequence, read N- to C-terminus: Isoprenyl transferase 1 (277 aa).

A disordered region spans residues 1–30 (MAVRGILGRQRREYRTPEPHPSGARPPKLG). Asp-42 is an active-site residue. Asp-42 is a binding site for Mg(2+). Residues 43-46 (GNGR), Trp-47, Arg-55, His-59, and 87-89 (STE) each bind substrate. The Proton acceptor role is filled by Asn-90. Residues Trp-91, Arg-93, Arg-210, and 216–218 (RTS) contribute to the substrate site. Glu-229 is a Mg(2+) binding site.

The protein belongs to the UPP synthase family. Homodimer. Mg(2+) serves as cofactor.

Catalyzes the condensation of isopentenyl diphosphate (IPP) with allylic pyrophosphates generating different type of terpenoids. The sequence is that of Isoprenyl transferase 1 from Streptomyces coelicolor (strain ATCC BAA-471 / A3(2) / M145).